The primary structure comprises 215 residues: Adenylate kinase (215 aa).

10 to 15 contributes to the ATP binding site; that stretch reads GAGKGT. The NMP stretch occupies residues 30 to 59; that stretch reads STGDILRANVRDGTKLGKEAKGYMDKGELV. AMP contacts are provided by residues T31, R36, 57-59, 85-88, and Q92; these read ELV and GYPR. The interval 126–162 is LID; that stretch reads GRYVCTCGESYHMKFNPPKKENVCDACGADLYQRDDD. R127 contributes to the ATP binding site. Zn(2+)-binding residues include C130 and C132. Residue 135–136 coordinates ATP; that stretch reads SY. C149 and C152 together coordinate Zn(2+). Residues R159 and R170 each contribute to the AMP site. G198 serves as a coordination point for ATP.

It belongs to the adenylate kinase family. As to quaternary structure, monomer.

The protein localises to the cytoplasm. It carries out the reaction AMP + ATP = 2 ADP. It participates in purine metabolism; AMP biosynthesis via salvage pathway; AMP from ADP: step 1/1. Catalyzes the reversible transfer of the terminal phosphate group between ATP and AMP. Plays an important role in cellular energy homeostasis and in adenine nucleotide metabolism. The sequence is that of Adenylate kinase from Methanococcoides burtonii (strain DSM 6242 / NBRC 107633 / OCM 468 / ACE-M).